The primary structure comprises 334 residues: Cytoskeleton protein RodZ (334 aa).

Topologically, residues 1–111 (MNTEATHDQN…LGKRRKKRDG (111 aa)) are cytoplasmic. Residues 19 to 71 (LRNAREQLGLSQQAVAERLCLKVSTVRDIEEDKAPSDLASTFLRGYIRSYARL) form the HTH cro/C1-type domain. Positions 30–49 (QQAVAERLCLKVSTVRDIEE) form a DNA-binding region, H-T-H motif. Residues 112–132 (WLMSFTWLVLFVVVGLTGAWW) traverse the membrane as a helical; Signal-anchor for type II membrane protein segment. The Periplasmic segment spans residues 133-334 (WQNHKAQQEE…TLNAEPTPAQ (202 aa)). The segment at 155–241 (NADKDSGQSV…PSALPTSQAG (87 aa)) is disordered. Polar residues predominate over residues 161–175 (GQSVPLDTGAVTSQD). Composition is skewed to low complexity over residues 176 to 211 (TTPA…TVVA) and 219 to 241 (TAAT…SQAG).

The protein belongs to the RodZ family.

It localises to the cell inner membrane. In terms of biological role, cytoskeletal protein that is involved in cell-shape control through regulation of the length of the long axis. The polypeptide is Cytoskeleton protein RodZ (Salmonella dublin (strain CT_02021853)).